A 230-amino-acid polypeptide reads, in one-letter code: GDT1-like protein 4 (230 aa).

The next 6 helical transmembrane spans lie at 12-32 (LAMT…AILA), 39-59 (LVLA…ATLG), 71-91 (THHI…WDGF), 135-155 (AFLT…NFFG), 175-195 (FGVV…AVIG), and 207-227 (IVAL…YLTS).

The protein belongs to the GDT1 family.

The protein localises to the membrane. The sequence is that of GDT1-like protein 4 from Arabidopsis thaliana (Mouse-ear cress).